A 593-amino-acid chain; its full sequence is MLGRIRPFVRYSVFRAGTYRTLFTSPYRMQISLIYNLFATCNSCGIKLQNENPSKPGFYRPPSARPKLVKPEDESFNRLMDGLSVEDRKLLLNSSDATLPQPVTASTAAATTTNTKKEGDIQCIRCREAMYKSNFSWDELPVESIDKIMSTIPPDGNVVYIVNAVDFPLSLNRSIFKYRNPSQITFLVTKCDLLFPSAQLSNRYGATFFKDYLSRTHGADPEKVFVTSGMIDWNMKDIIKALPDNSYMVGGVNSGKSTVIKSLLYTMEKSKPNYLSSKQQTKLEKQQDRMINSNAVNRHQHTKSQRKVEQKFKMTYGPGTSYMPGFTRGHIVHDIDGKTIVDVPGFSANESHGIYGYLDPSTIKTLSKGVKVHKRGMYDSLYESVRNGQVLTIGGLFYLATPQNAVYQIKNCINHKFHVFNSMDKAISILQTIEKNKALENVFLVNKQSLDKLQKFIIPPFYGSIDLVIKNLGHLNITPTGKKIDNEPLVIYLPEGVEAIIRQPLTRYITRSLAGRDKNGNPLRKELWKSKSVTHLQRFNGTTPFASLLIPSTGSDNLQCISEYNSKLNDTPITYDNNTHLDESNKYKYWVNI.

Residues M1–P61 constitute a mitochondrion transit peptide. A CP-type G domain is found at V142–N349.

The protein belongs to the TRAFAC class YlqF/YawG GTPase family. GEP3 subfamily.

The protein resides in the mitochondrion. Its function is as follows. May be involved in the mitochondrial lipid metabolism. The polypeptide is Genetic interactor of prohibitins 3, mitochondrial (GEP3) (Debaryomyces hansenii (strain ATCC 36239 / CBS 767 / BCRC 21394 / JCM 1990 / NBRC 0083 / IGC 2968) (Yeast)).